The chain runs to 352 residues: tRNA (guanine(26)-N(2))-dimethyltransferase (352 aa).

The Trm1 methyltransferase domain maps to 4–350; that stretch reads ILNKEGAVEF…ANYDEIARIL (347 aa). S-adenosyl-L-methionine contacts are provided by R39, R65, D83, D109, and A110.

The protein belongs to the class I-like SAM-binding methyltransferase superfamily. Trm1 family.

The catalysed reaction is guanosine(26) in tRNA + 2 S-adenosyl-L-methionine = N(2)-dimethylguanosine(26) in tRNA + 2 S-adenosyl-L-homocysteine + 2 H(+). In terms of biological role, dimethylates a single guanine residue at position 26 of a number of tRNAs using S-adenosyl-L-methionine as donor of the methyl groups. This is tRNA (guanine(26)-N(2))-dimethyltransferase from Pyrobaculum islandicum (strain DSM 4184 / JCM 9189 / GEO3).